The chain runs to 480 residues: MAANGSSSEGDHRLLIVSNRLPITIRRSGGGKYEFSMSSGGLVTGLSGLSKTTTFQWYGWPGLEVPEDEIDSVKQRLQEEFNATPVFMDDKLADRHYNGFSNSILWPLLHYHPGEIVFDEAAWDAYREANRLFAKTIAHEAREGDLVWVHDYHLMLLPEVLREELAALGKNNIRIGFFLHTPFPSSEIYRILPVRSQLLRGVLQCDLIGFHTYDYARHFLSCCSHILGLVTTPSSVKFKDRSVAVGAFPIGIDPDKFTEGLKSPKVQNRIASLENKFQGTKLMVSVDRLDYIKGIPQKLHALEVFLSQHPEWVGKVVLVQVAVPSRQDVEEYQNLRAVVNELVGRINGKFGTVDYMPIHFMHKSVSFDELIALYAASDACVVSSTRDGMNLVSFEYVATQQKRKGVLILSEFAGAAQSLNGSIVVNPWNTEELASAYHEAVSMSDDLRAQKFEKLYKYISKYTSAFWGKSFVAELSKCST.

2 residues coordinate D-glucose 6-phosphate: Tyr97 and Asp151. Positions 288 and 293 each coordinate UDP. 2 residues coordinate UDP-alpha-D-glucose: Arg288 and Lys293. D-glucose 6-phosphate is bound at residue Arg326. 387–395 is a binding site for UDP-alpha-D-glucose; that stretch reads DGMNLVSFE. Position 391–395 (391–395) interacts with UDP; that stretch reads LVSFE.

This sequence belongs to the glycosyltransferase 20 family.

It catalyses the reaction D-glucose 6-phosphate + UDP-alpha-D-glucose = alpha,alpha-trehalose 6-phosphate + UDP + H(+). It participates in carbohydrate biosynthesis. Functionally, synthase catalytic subunit of the trehalose synthase complex that catalyzes the production of trehalose from glucose-6-phosphate and UDP-alpha-D-glucose in a two step process. This chain is Alpha,alpha-trehalose-phosphate synthase [UDP-forming] 2, found in Aspergillus niger.